The following is a 281-amino-acid chain: MDFFNKFSQGLAESSTPKSSIYYSEEKDPDTKKDEAIEIGLKSQESYYQRQLREQLARDNMTVASRQPIQPLQPTIHITPQPVPTATPAPILLPSSTVPTPKPRQQTNTSSDMSNLFDWLSEDTDAPASSLLPALTPSNAVQDIISKFNKDQKTTTPPSTQPSQTLPTTTCTQQSDGNISCTTPTVTPPQPPIVATVCTPTPTGGTVCTTAQQNPNPGAASQQNLDDMALKDLMSNVERDMHQLQAETNDLVTNVYDAREYTRRAIDQILQLVKGFERFQK.

Residues 1–22 (MDFFNKFSQGLAESSTPKSSIY) are compositionally biased toward polar residues. Disordered stretches follow at residues 1 to 33 (MDFFNKFSQGLAESSTPKSSIYYSEEKDPDTKK), 93 to 112 (LPSSTVPTPKPRQQTNTSSD), and 149 to 188 (NKDQKTTTPPSTQPSQTLPTTTCTQQSDGNISCTTPTVTP). The segment covering 24–33 (SEEKDPDTKK) has biased composition (basic and acidic residues). The segment covering 94 to 112 (PSSTVPTPKPRQQTNTSSD) has biased composition (polar residues). Residues 154–175 (TTTPPSTQPSQTLPTTTCTQQS) are compositionally biased toward low complexity.

This sequence belongs to the orthopoxvirus OPG130 family. In terms of assembly, interacts with OPG136 and its cleaved form. Its phosphorylation state is regulated by the OPG054 kinase and the OPG106 phosphatase.

Its subcellular location is the virion. The protein localises to the host endoplasmic reticulum-Golgi intermediate compartment membrane. Functionally, component of the virion core. Participates in virion assembly. This chain is 39kDa core protein OPG130 (OPG130), found in Vaccinia virus (strain Western Reserve) (VACV).